A 479-amino-acid polypeptide reads, in one-letter code: UDP-glycosyltransferase 85A5 (479 aa).

Residues serine 301, 358 to 360, 375 to 383, and 397 to 400 contribute to the UDP-alpha-D-glucose site; these read CPQ, HSGWNSTLE, and FAEQ.

It belongs to the UDP-glycosyltransferase family. In terms of tissue distribution, expressed in roots, shoots and leaves.

The polypeptide is UDP-glycosyltransferase 85A5 (UGT85A5) (Arabidopsis thaliana (Mouse-ear cress)).